We begin with the raw amino-acid sequence, 595 residues long: Beta-(1--&gt;2)glucan export ATP-binding/permease protein NdvA (595 aa).

Helical transmembrane passes span 21–41 (FLLI…EPIL), 56–76 (LVTL…YVLV), 129–149 (IWLE…VLVP), 158–178 (LSIV…LVMQ), and 252–272 (ISIV…QLSV). Positions 21-301 (FLLICTANIT…ISGFINLAVS (281 aa)) constitute an ABC transmembrane type-1 domain. Residues 335–569 (IQFHHVTYEF…DGHFYKLLKR (235 aa)) enclose the ABC transporter domain. ATP is bound at residue 368–375 (GPTGAGKT).

It belongs to the ABC transporter superfamily. Beta-(1--&gt;2)glucan exporter (TC 3.A.1.108.1) family. In terms of assembly, homodimer.

The protein resides in the cell inner membrane. The catalysed reaction is [(1-&gt;2)-beta-D-glucosyl](n)(in) + ATP + H2O = [(1-&gt;2)-beta-D-glucosyl](n)(out) + ADP + phosphate + H(+). Functionally, involved in beta-(1--&gt;2)glucan export. Transmembrane domains (TMD) form a pore in the inner membrane and the ATP-binding domain (NBD) is responsible for energy generation. This Bartonella bacilliformis protein is Beta-(1--&gt;2)glucan export ATP-binding/permease protein NdvA.